The chain runs to 243 residues: Tryptophan synthase alpha chain (243 aa).

Residues glutamate 32 and aspartate 43 each act as proton acceptor in the active site.

Belongs to the TrpA family. Tetramer of two alpha and two beta chains.

The protein resides in the plastid. It is found in the chloroplast. The enzyme catalyses (1S,2R)-1-C-(indol-3-yl)glycerol 3-phosphate + L-serine = D-glyceraldehyde 3-phosphate + L-tryptophan + H2O. Its pathway is amino-acid biosynthesis; L-tryptophan biosynthesis; L-tryptophan from chorismate: step 5/5. The alpha subunit is responsible for the aldol cleavage of indoleglycerol phosphate to indole and glyceraldehyde 3-phosphate. This Cyanidioschyzon merolae (strain NIES-3377 / 10D) (Unicellular red alga) protein is Tryptophan synthase alpha chain.